Consider the following 638-residue polypeptide: 1-deoxy-D-xylulose-5-phosphate synthase (638 aa).

Thiamine diphosphate contacts are provided by residues histidine 71 and 112–114 (SHA). Aspartate 144 contributes to the Mg(2+) binding site. Thiamine diphosphate-binding positions include 145–146 (GA), asparagine 173, tyrosine 284, and glutamate 365. Residue asparagine 173 coordinates Mg(2+).

It belongs to the transketolase family. DXPS subfamily. Homodimer. Mg(2+) serves as cofactor. Requires thiamine diphosphate as cofactor.

It catalyses the reaction D-glyceraldehyde 3-phosphate + pyruvate + H(+) = 1-deoxy-D-xylulose 5-phosphate + CO2. The protein operates within metabolic intermediate biosynthesis; 1-deoxy-D-xylulose 5-phosphate biosynthesis; 1-deoxy-D-xylulose 5-phosphate from D-glyceraldehyde 3-phosphate and pyruvate: step 1/1. Catalyzes the acyloin condensation reaction between C atoms 2 and 3 of pyruvate and glyceraldehyde 3-phosphate to yield 1-deoxy-D-xylulose-5-phosphate (DXP). The sequence is that of 1-deoxy-D-xylulose-5-phosphate synthase from Mycobacterium bovis (strain ATCC BAA-935 / AF2122/97).